A 132-amino-acid polypeptide reads, in one-letter code: MTMTDPVADMLTRLRNANSAHHDTVSMPHSKLKVHIAEILTTEGYISGWEVADARVGQTLTLSLKFGPNRERSIAGIKRVSKPGLRVYAKSTELPKVLGGLGVAILSTSSGLLTDRQAEKKGVGGEVLAYVW.

This sequence belongs to the universal ribosomal protein uS8 family. In terms of assembly, part of the 30S ribosomal subunit. Contacts proteins S5 and S12.

In terms of biological role, one of the primary rRNA binding proteins, it binds directly to 16S rRNA central domain where it helps coordinate assembly of the platform of the 30S subunit. The sequence is that of Small ribosomal subunit protein uS8 from Leifsonia xyli subsp. xyli (strain CTCB07).